A 364-amino-acid polypeptide reads, in one-letter code: Gap junction delta-4 protein (364 aa).

At 1 to 19 the chain is on the cytoplasmic side; that stretch reads MEKLNLLGFLIITLNCNVT. Residues 20 to 40 traverse the membrane as a helical segment; it reads IMGMIWLIVEVLLRMLVVVLA. Topologically, residues 41-76 are extracellular; sequence GSPIYEDEQERFICNTLQPGCANVCYDLFSPVSPLR. A helical transmembrane segment spans residues 77 to 97; the sequence is FWLVQSLALLLPSVVFGTYTL. Residues 98 to 128 lie on the Cytoplasmic side of the membrane; that stretch reads HRGAKLAAVGGACRPQVPDLSTAYLVHLLLR. The helical transmembrane segment at 129–149 threads the bilayer; the sequence is MLLEAGLAFLHYFLFGFSVPA. The Extracellular portion of the chain corresponds to 150 to 173; that stretch reads RVSCSHVPCSGAVDCYVSRPTEKS. Residues 174 to 194 form a helical membrane-spanning segment; it reads LLILFFWAVSALSFLLSLADL. Over 195–364 the chain is Cytoplasmic; sequence LWILPRRKTL…HLRTKKSEWV (170 aa). The span at 331–340 shows a compositional bias: polar residues; the sequence is HLARHSSASK. The segment at 331-364 is disordered; the sequence is HLARHSSASKPQAPCRLTTSGSAPHLRTKKSEWV.

The protein belongs to the connexin family. Delta-type subfamily. As to quaternary structure, a connexon is composed of a hexamer of connexins.

It localises to the cell membrane. Its subcellular location is the cell junction. The protein localises to the gap junction. Its function is as follows. One gap junction consists of a cluster of closely packed pairs of transmembrane channels, the connexons, through which materials of low MW diffuse from one cell to a neighboring cell. The protein is Gap junction delta-4 protein (Gjd4) of Mus musculus (Mouse).